A 203-amino-acid chain; its full sequence is Peroxiredoxin (203 aa).

A Thioredoxin domain is found at 3–156 (VVLGQKAPDF…IIRVIKALQF (154 aa)). Cysteine 44 (cysteine sulfenic acid (-SOH) intermediate) is an active-site residue. Arginine 119 serves as a coordination point for substrate.

Belongs to the peroxiredoxin family. Prx6 subfamily. As to quaternary structure, homodecamer. Pentamer of dimers that assemble into a ring structure.

The protein resides in the cytoplasm. It catalyses the reaction a hydroperoxide + [thioredoxin]-dithiol = an alcohol + [thioredoxin]-disulfide + H2O. In terms of biological role, thiol-specific peroxidase that catalyzes the reduction of hydrogen peroxide and organic hydroperoxides to water and alcohols, respectively. Plays a role in cell protection against oxidative stress by detoxifying peroxides. In Thermoplasma volcanium (strain ATCC 51530 / DSM 4299 / JCM 9571 / NBRC 15438 / GSS1), this protein is Peroxiredoxin.